The sequence spans 292 residues: tRNA pseudouridine synthase B (292 aa).

The active-site Nucleophile is the aspartate 40.

This sequence belongs to the pseudouridine synthase TruB family. Type 1 subfamily.

The enzyme catalyses uridine(55) in tRNA = pseudouridine(55) in tRNA. Responsible for synthesis of pseudouridine from uracil-55 in the psi GC loop of transfer RNAs. The chain is tRNA pseudouridine synthase B from Mycoplasma capricolum subsp. capricolum (strain California kid / ATCC 27343 / NCTC 10154).